Consider the following 181-residue polypeptide: Protein Syd (181 aa).

It belongs to the Syd family.

The protein localises to the cell inner membrane. In terms of biological role, interacts with the SecY protein in vivo. May bind preferentially to an uncomplexed state of SecY, thus functioning either as a chelating agent for excess SecY in the cell or as a regulatory factor that negatively controls the translocase function. This is Protein Syd from Enterobacter sp. (strain 638).